The sequence spans 179 residues: Large ribosomal subunit protein uL6 (179 aa).

It belongs to the universal ribosomal protein uL6 family. Part of the 50S ribosomal subunit.

In terms of biological role, this protein binds to the 23S rRNA, and is important in its secondary structure. It is located near the subunit interface in the base of the L7/L12 stalk, and near the tRNA binding site of the peptidyltransferase center. The protein is Large ribosomal subunit protein uL6 of Gemmatimonas aurantiaca (strain DSM 14586 / JCM 11422 / NBRC 100505 / T-27).